A 344-amino-acid polypeptide reads, in one-letter code: Methionine import ATP-binding protein MetN 1 (344 aa).

An ABC transporter domain is found at 2–241; the sequence is IELRNLSQRF…PHHEVTRALI (240 aa). 38 to 45 serves as a coordination point for ATP; the sequence is GRSGAGKS.

Belongs to the ABC transporter superfamily. Methionine importer (TC 3.A.1.24) family. As to quaternary structure, the complex is composed of two ATP-binding proteins (MetN), two transmembrane proteins (MetI) and a solute-binding protein (MetQ).

Its subcellular location is the cell inner membrane. The catalysed reaction is L-methionine(out) + ATP + H2O = L-methionine(in) + ADP + phosphate + H(+). It carries out the reaction D-methionine(out) + ATP + H2O = D-methionine(in) + ADP + phosphate + H(+). Functionally, part of the ABC transporter complex MetNIQ involved in methionine import. Responsible for energy coupling to the transport system. The sequence is that of Methionine import ATP-binding protein MetN 1 from Burkholderia orbicola (strain AU 1054).